A 449-amino-acid chain; its full sequence is Phosphoglucosamine mutase (449 aa).

The Phosphoserine intermediate role is filled by Ser-101. Mg(2+) is bound by residues Ser-101, Asp-243, Asp-245, and Asp-247. Ser-101 is subject to Phosphoserine.

This sequence belongs to the phosphohexose mutase family. It depends on Mg(2+) as a cofactor. Post-translationally, activated by phosphorylation.

It carries out the reaction alpha-D-glucosamine 1-phosphate = D-glucosamine 6-phosphate. Its function is as follows. Catalyzes the conversion of glucosamine-6-phosphate to glucosamine-1-phosphate. The sequence is that of Phosphoglucosamine mutase from Syntrophus aciditrophicus (strain SB).